The following is a 283-amino-acid chain: 9,11-endoperoxide prostaglandin H2 reductase (283 aa).

NADP(+) is bound by residues 23 to 24 (VW) and D48. Residue Y53 is the Proton donor of the active site. H111 provides a ligand contact to substrate. NADP(+) is bound by residues 140-141 (SN), Q162, 188-193 (WSPLGS), 234-236 (KST), and 240-244 (RIQEN). A disordered region spans residues 264 to 283 (NEDKRIGGDPDNFFPGGEEA).

It belongs to the aldo/keto reductase family. Monomer.

Its subcellular location is the cytoplasm. The catalysed reaction is prostaglandin F2alpha + NADP(+) = prostaglandin H2 + NADPH + H(+). Its pathway is lipid metabolism; prostaglandin biosynthesis. In terms of biological role, catalyzes the NADP-dependent formation of prostaglandin F2-alpha from prostaglandin H2. Also has aldo/ketoreductase activity towards the synthetic substrates 9,10-phenanthrenequinone and p-nitrobenzaldehyde. The polypeptide is 9,11-endoperoxide prostaglandin H2 reductase (Trypanosoma cruzi (strain CL Brener)).